A 346-amino-acid chain; its full sequence is Ornithine carbamoyltransferase, catabolic (346 aa).

Residues 58–61 (STRT), N85, R109, and 136–139 (HPTQ) contribute to the carbamoyl phosphate site. L-ornithine-binding positions include N168, D239, and 243-244 (SL). Carbamoyl phosphate is bound by residues 280 to 281 (CL) and R332.

Belongs to the aspartate/ornithine carbamoyltransferase superfamily. OTCase family.

Its subcellular location is the cytoplasm. It carries out the reaction carbamoyl phosphate + L-ornithine = L-citrulline + phosphate + H(+). The protein operates within amino-acid degradation; L-arginine degradation via ADI pathway; carbamoyl phosphate from L-arginine: step 2/2. Functionally, reversibly catalyzes the transfer of the carbamoyl group from carbamoyl phosphate (CP) to the N(epsilon) atom of ornithine (ORN) to produce L-citrulline. This is Ornithine carbamoyltransferase, catabolic from Mycoplasma pneumoniae (strain ATCC 29342 / M129 / Subtype 1) (Mycoplasmoides pneumoniae).